Consider the following 432-residue polypeptide: MKFTLVATVLLTFSLSAFAVEYPVLTIASPDQVGFDSQKLHRLDGWIQNQIDAGYPSINLLVIKDNHIVLQKAWGYAKKYDGSTLLAHPIRATTNTMYDLASNTKMYATNFALQKLVYEGKIDVNDLVSKYIPGFKDMPGDKIKGKDKLRIIDILHHVAGFPADPQYPNKNVAGKLFSQSKSTTLEMIKKTPLEYQPRSKHIYSDVDYMILGFIIESITAMPLDRYVETTIYKPLGLKHTVFNPLMKGFTPPQIAATELHGNTRDGVIHFPNIRTNTLWGQVHDEKAWYSMGGVSGHAGLFSDTHDMAVLMQVMLNGGGYGNLKLFDDKTVAQFTRRSPEDATFGLGWRVNGNSSMTPTFGVLASPQTYGHTGWTGTLTSIDPVNHMAIVILGNRPHSPVANPKVNPNVFVSGLLPAATYGWIVDQIYGSLK.

The chain crosses the membrane as a helical; Signal-anchor span at residues 7–25 (ATVLLTFSLSAFAVEYPVL).

The protein belongs to the peptidase S12 family. YfeW subfamily.

It localises to the cell inner membrane. It catalyses the reaction Preferential cleavage: (Ac)2-L-Lys-D-Ala-|-D-Ala. Also transpeptidation of peptidyl-alanyl moieties that are N-acyl substituents of D-alanine.. This chain is Putative D-alanyl-D-alanine carboxypeptidase, found in Salmonella gallinarum (strain 287/91 / NCTC 13346).